Consider the following 510-residue polypeptide: Inositol-3-phosphate synthase (510 aa).

The NAD(+) site is built by Gly-70, Gly-71, Asn-72, Asn-73, Asp-143, Ile-180, Gln-190, Arg-193, Thr-230, Ala-231, Asn-232, Thr-233, Gly-281, Ser-282, Asp-306, Ser-309, Asn-340, Asn-341, Asp-342, Lys-355, Gly-393, Asp-394, Asp-422, and Ser-423.

The protein belongs to the myo-inositol 1-phosphate synthase family. Requires NAD(+) as cofactor.

It localises to the cytoplasm. Its subcellular location is the cytosol. The protein resides in the nucleus. It catalyses the reaction D-glucose 6-phosphate = 1D-myo-inositol 3-phosphate. Its pathway is polyol metabolism; myo-inositol biosynthesis; myo-inositol from D-glucose 6-phosphate: step 1/2. Its function is as follows. Key enzyme in myo-inositol biosynthesis pathway that catalyzes the conversion of glucose 6-phosphate to 1-myo-inositol 1-phosphate in a NAD-dependent manner. This chain is Inositol-3-phosphate synthase, found in Sesamum indicum (Oriental sesame).